The primary structure comprises 895 residues: WD repeat-containing protein 36 (895 aa).

8 WD repeats span residues 30–63 (VVRF…LVAV), 72–101 (CCMA…IVHT), 110–143 (HFLQ…LQLT), 152–186 (SAIL…LLYT), 193–230 (GVTA…MKFR), 237–272 (TSIS…INQM), 277–320 (STAI…RFRM), and 327–361 (TNIR…FNKS). Phosphoserine is present on residues Ser-382 and Ser-399. WD repeat units follow at residues 389-428 (TKFA…GAYF), 441-475 (ATAV…HRGS), 486-522 (VRGV…HSVS), 527-562 (PNIM…VREF), 564-605 (GHQG…DCFL), and 607-645 (DSAP…SVVS).

In terms of assembly, part of the small subunit (SSU) processome, composed of more than 70 proteins and the RNA chaperone small nucleolar RNA (snoRNA) U3. As to expression, expressed in heart, placenta, liver, skeletal muscle, kidney and pancreas. In ocular tissues, strong expression in iris, sclera, ciliary muscle, ciliary body, retina and optic nerve.

The protein localises to the nucleus. It is found in the nucleolus. Functionally, part of the small subunit (SSU) processome, first precursor of the small eukaryotic ribosomal subunit. During the assembly of the SSU processome in the nucleolus, many ribosome biogenesis factors, an RNA chaperone and ribosomal proteins associate with the nascent pre-rRNA and work in concert to generate RNA folding, modifications, rearrangements and cleavage as well as targeted degradation of pre-ribosomal RNA by the RNA exosome. Involved in the nucleolar processing of SSU 18S rRNA. Involved in T-cell activation and highly coregulated with IL2. This chain is WD repeat-containing protein 36, found in Homo sapiens (Human).